The sequence spans 735 residues: NAD(P)H-quinone oxidoreductase subunit 5, chloroplastic (735 aa).

The next 16 helical transmembrane spans lie at 9–29 (WIIP…LLLF), 40–60 (WAFP…DLSI), 89–109 (IDSL…FVLI), 125–145 (FAYM…CNLI), 147–167 (IYIF…FWFT), 184–204 (IGDF…GSFE), 219–239 (NEVH…GAVA), 258–278 (TPIS…FLVA), 280–300 (LLPL…IGII), 327–347 (LGYM…FHLI), 354–374 (ALLF…VGYS), 396–416 (IAFL…CFWS), 425–445 (WLYS…TAFY), 540–560 (LFPM…AIPF), 600–620 (FSVS…KPFY), and 714–734 (FYLL…YFIL).

This sequence belongs to the complex I subunit 5 family. In terms of assembly, NDH is composed of at least 16 different subunits, 5 of which are encoded in the nucleus.

The protein localises to the plastid. It localises to the chloroplast thylakoid membrane. It catalyses the reaction a plastoquinone + NADH + (n+1) H(+)(in) = a plastoquinol + NAD(+) + n H(+)(out). The catalysed reaction is a plastoquinone + NADPH + (n+1) H(+)(in) = a plastoquinol + NADP(+) + n H(+)(out). Its function is as follows. NDH shuttles electrons from NAD(P)H:plastoquinone, via FMN and iron-sulfur (Fe-S) centers, to quinones in the photosynthetic chain and possibly in a chloroplast respiratory chain. The immediate electron acceptor for the enzyme in this species is believed to be plastoquinone. Couples the redox reaction to proton translocation, and thus conserves the redox energy in a proton gradient. This is NAD(P)H-quinone oxidoreductase subunit 5, chloroplastic (ndhF) from Gossypium hirsutum (Upland cotton).